A 655-amino-acid chain; its full sequence is D-xylonate dehydratase YagF (655 aa).

This sequence belongs to the IlvD/Edd family.

It carries out the reaction D-xylonate = 2-dehydro-3-deoxy-D-arabinonate + H2O. Catalyzes the dehydration of D-xylonic acid to form 2-dehydro-3-deoxy-D-pentonate. The protein is D-xylonate dehydratase YagF (yagF) of Escherichia coli (strain K12).